Consider the following 372-residue polypeptide: PqqA peptide cyclase (372 aa).

The region spanning 4-219 (APPPLSVLLE…VDTARRELGD (216 aa)) is the Radical SAM core domain. Residues Cys18, Cys22, and Cys25 each contribute to the [4Fe-4S] cluster site. The segment at 342 to 372 (ATAEREAAAPAPEFIYRRPERPAPATADTLE) is disordered.

This sequence belongs to the radical SAM superfamily. PqqE family. As to quaternary structure, interacts with PqqD. The interaction is necessary for activity of PqqE. It depends on [4Fe-4S] cluster as a cofactor.

It catalyses the reaction [PQQ precursor protein] + S-adenosyl-L-methionine = E-Y cross-linked-[PQQ precursor protein] + 5'-deoxyadenosine + L-methionine + H(+). It participates in cofactor biosynthesis; pyrroloquinoline quinone biosynthesis. In terms of biological role, catalyzes the cross-linking of a glutamate residue and a tyrosine residue in the PqqA protein as part of the biosynthesis of pyrroloquinoline quinone (PQQ). The protein is PqqA peptide cyclase of Xanthomonas oryzae pv. oryzae (strain MAFF 311018).